The following is a 962-amino-acid chain: RNA-binding protein 15 (962 aa).

3 stretches are compositionally biased toward basic and acidic residues: residues 1–10 (MRSAGREPLP), 34–52 (LRRD…ERSP), and 59–72 (RGGE…ERSK). Residues 1-167 (MRSAGREPLP…SAPGGGDGVE (167 aa)) are disordered. Over residues 82–94 (GSSSGKTDSGGSR) the composition is skewed to low complexity. A compositionally biased stretch (basic and acidic residues) spans 97–112 (LHLDKSSSRGGSREYE). Phosphoserine is present on Ser-108. The segment covering 118–129 (SSSRLHSYSSPS) has biased composition (low complexity). A compositionally biased stretch (gly residues) spans 134 to 149 (SGGGESRSSSRGGGGE). The segment covering 150-159 (SRSSGAASSA) has biased composition (low complexity). The 83-residue stretch at 169–251 (KTLKISELGS…RPLKIEAVYV (83 aa)) folds into the RRM 1 domain. 3 positions are modified to phosphoserine: Ser-178, Ser-207, and Ser-209. Residue Lys-245 forms a Glycyl lysine isopeptide (Lys-Gly) (interchain with G-Cter in SUMO2) linkage. A phosphoserine mark is found at Ser-252, Ser-256, and Ser-258. The interval 257–297 (RSPLDKDAYAPSSSVVGTSVGSHRHAPGGGGGQRSLSPGGA) is disordered. Tyr-265 bears the Phosphotyrosine mark. Over residues 268–277 (SSSVVGTSVG) the composition is skewed to low complexity. A phosphoserine mark is found at Ser-291, Ser-293, and Ser-364. 2 RRM domains span residues 373-450 (RTLF…YGKA) and 454-528 (TRLW…FADT). Glycyl lysine isopeptide (Lys-Gly) (interchain with G-Cter in SUMO2) cross-links involve residues Lys-405, Lys-419, and Lys-444. Lys-449 carries the post-translational modification N6-acetyllysine. Basic and acidic residues-rich tracts occupy residues 553 to 580 (GHRA…RDLY) and 612 to 661 (SLDR…SERP). A disordered region spans residues 553-779 (GHRAPDPLRS…KQDGGTAPVA (227 aa)). Position 567 is a phosphothreonine (Thr-567). Arg-577 is modified (asymmetric dimethylarginine; alternate; by PRMT1). Position 577 is an omega-N-methylarginine; alternate; by PRMT1 (Arg-577). A phosphoserine mark is found at Ser-621, Ser-655, Ser-670, Ser-674, and Ser-701. 3 stretches are compositionally biased toward basic and acidic residues: residues 673–692 (RSPE…DRSS), 701–729 (SPVR…AERD), and 742–751 (NPLKKEDRSD). Lys-745 is covalently cross-linked (Glycyl lysine isopeptide (Lys-Gly) (interchain with G-Cter in SUMO2)). A compositionally biased stretch (low complexity) spans 754–771 (APSASTSSSKQKPPSQKQ). A phosphoserine mark is found at Ser-768 and Ser-782. An SPOC domain is found at 778-957 (VAASSPKLCL…YLVMIIVRAK (180 aa)). The interval 866-885 (GSSDSRSSSSSATSDTAAST) is disordered. A compositionally biased stretch (low complexity) spans 867–885 (SSDSRSSSSSATSDTAAST). A Phosphoserine modification is found at Ser-936.

It belongs to the RRM Spen family. Component of the WMM complex, a N6-methyltransferase complex composed of a catalytic subcomplex, named MAC, and of an associated subcomplex, named MACOM. The MAC subcomplex is composed of METTL3 and METTL14. The MACOM subcomplex is composed of WTAP, ZC3H13, CBLL1/HAKAI, VIRMA, and, in some cases of RBM15 (RBM15 or RBM15B). Also a component of a MACOM-like complex, named WTAP complex, composed of WTAP, ZC3H13, CBLL1, VIRMA, RBM15, BCLAF1 and THRAP3. Interacts with RBPJ. Interacts (via SPOC domain) with SETD1B. Interacts with NXF1, the interaction is required to promote mRNA export. Interacts with SF3B1. Post-translationally, methylated at Arg-577 by PRMT1, leading to promote ubiquitination by CNOT4 and subsequent degradation by the proteasome. Ubiquitinated by CNOT4 following methylation at Arg-577 by PRMT1.

The protein resides in the nucleus speckle. It is found in the nucleus. The protein localises to the nucleoplasm. Its subcellular location is the nucleus envelope. It localises to the nucleus membrane. Functionally, RNA-binding protein that acts as a key regulator of N6-methyladenosine (m6A) methylation of RNAs, thereby regulating different processes, such as hematopoietic cell homeostasis, alternative splicing of mRNAs and X chromosome inactivation mediated by Xist RNA. Associated component of the WMM complex, a complex that mediates N6-methyladenosine (m6A) methylation of RNAs, a modification that plays a role in the efficiency of mRNA splicing and RNA processing. Plays a key role in m6A methylation, possibly by binding target RNAs and recruiting the WMM complex. Involved in random X inactivation mediated by Xist RNA: acts by binding Xist RNA and recruiting the WMM complex, which mediates m6A methylation, leading to target YTHDC1 reader on Xist RNA and promoting transcription repression activity of Xist. Required for the development of multiple tissues, such as the maintenance of the homeostasis of long-term hematopoietic stem cells and for megakaryocyte (MK) and B-cell differentiation. Regulates megakaryocyte differentiation by regulating alternative splicing of genes important for megakaryocyte differentiation; probably regulates alternative splicing via m6A regulation. Required for placental vascular branching morphogenesis and embryonic development of the heart and spleen. Acts as a regulator of thrombopoietin response in hematopoietic stem cells by regulating alternative splicing of MPL. May also function as an mRNA export factor, stimulating export and expression of RTE-containing mRNAs which are present in many retrotransposons that require to be exported prior to splicing. High affinity binding of pre-mRNA to RBM15 may allow targeting of the mRNP to the export helicase DBP5 in a manner that is independent of splicing-mediated NXF1 deposition, resulting in export prior to splicing. May be implicated in HOX gene regulation. The sequence is that of RNA-binding protein 15 from Mus musculus (Mouse).